Here is a 399-residue protein sequence, read N- to C-terminus: Bombesin receptor subtype-3 (399 aa).

At Met1–Ser41 the chain is on the extracellular side. Asn10 and Asn18 each carry an N-linked (GlcNAc...) asparagine glycan. Residues Pro42–Leu63 form a helical membrane-spanning segment. Topologically, residues Gly64–Pro82 are cytoplasmic. A helical transmembrane segment spans residues Asn83–Val103. The Extracellular segment spans residues Asp104–Lys121. Cys120 and Cys203 are oxidised to a cystine. Residues Val122 to Ala143 form a helical membrane-spanning segment. Residues Asp144–Lys163 lie on the Cytoplasmic side of the membrane. Residues Thr164–Ile184 traverse the membrane as a helical segment. The Extracellular segment spans residues Phe185–Leu220. A helical transmembrane segment spans residues Ser221–Ala241. At Arg242 to Thr272 the chain is on the cytoplasmic side. The helical transmembrane segment at Val273–Tyr293 threads the bilayer. Topologically, residues His294–Ile313 are extracellular. The chain crosses the membrane as a helical span at residues Phe314–Leu333. Residues Ser334 to Val399 are Cytoplasmic-facing. The S-palmitoyl cysteine moiety is linked to residue Cys347.

Belongs to the G-protein coupled receptor 1 family. As to quaternary structure, interacts with C6orf89. Mainly in uteri of pregnant animals.

It is found in the cell membrane. Its function is as follows. Role in sperm cell division, maturation, or function. The relative order of ligand affinity is GRP = neuromedin-C &gt;&gt; neuromedin-B. This receptor mediates its action by association with G proteins that activate a phosphatidylinositol-calcium second messenger system. This Cavia porcellus (Guinea pig) protein is Bombesin receptor subtype-3 (BRS3).